A 572-amino-acid polypeptide reads, in one-letter code: Putative lysozyme-like protein (572 aa).

The N-terminal stretch at 1–17 is a signal peptide; sequence MRLLLVLLALIFSVVSA. Low complexity predominate over residues 145 to 165; the sequence is MSSSGSSSSSGSSGSSSSSSG. Disordered stretches follow at residues 145–199, 231–297, 326–388, and 433–469; these read MSSS…HGGG, SSSS…GGGV, ANSV…GERK, and AGSS…GGSG. Residues 166-185 are compositionally biased toward gly residues; it reads SSGGGSSGGGSGGGGGGSGL. Over residues 231 to 240 the composition is skewed to low complexity; that stretch reads SSSSADAGSS. Positions 258–282 are enriched in gly residues; the sequence is STGGTGGSSGSSGGGSGGGGGGSGL. Positions 326-358 are enriched in low complexity; that stretch reads ANSVSSLAGSMSSSGSSSSSGSSGSSSSSSSSG. Over residues 359-382 the composition is skewed to gly residues; the sequence is SSGGSSGGGSSGGGSGGGGGGSGL. Positions 433-452 are enriched in low complexity; that stretch reads AGSSSSSGSSGSSSSSSSSG. Over residues 453–469 the composition is skewed to gly residues; the sequence is SSGGSSGGSSGGGGGSG.

The protein belongs to the dictyostelium lysozyme family.

The protein is Putative lysozyme-like protein (alyL) of Dictyostelium discoideum (Social amoeba).